A 103-amino-acid chain; its full sequence is Integration host factor subunit beta (103 aa).

The disordered stretch occupies residues 62-81; that stretch reads RNPKTGESVALPGKHVPHFK.

Belongs to the bacterial histone-like protein family. As to quaternary structure, heterodimer of an alpha and a beta chain.

Its function is as follows. This protein is one of the two subunits of integration host factor, a specific DNA-binding protein that functions in genetic recombination as well as in transcriptional and translational control. This is Integration host factor subunit beta from Xanthomonas axonopodis pv. citri (strain 306).